A 158-amino-acid polypeptide reads, in one-letter code: Transcription elongation factor GreA (158 aa).

Residues Asn-47 to Ala-74 adopt a coiled-coil conformation.

This sequence belongs to the GreA/GreB family.

Necessary for efficient RNA polymerase transcription elongation past template-encoded arresting sites. The arresting sites in DNA have the property of trapping a certain fraction of elongating RNA polymerases that pass through, resulting in locked ternary complexes. Cleavage of the nascent transcript by cleavage factors such as GreA or GreB allows the resumption of elongation from the new 3'terminus. GreA releases sequences of 2 to 3 nucleotides. The polypeptide is Transcription elongation factor GreA (Clostridium perfringens (strain ATCC 13124 / DSM 756 / JCM 1290 / NCIMB 6125 / NCTC 8237 / Type A)).